We begin with the raw amino-acid sequence, 470 residues long: 3-isopropylmalate dehydratase large subunit (470 aa).

[4Fe-4S] cluster contacts are provided by cysteine 348, cysteine 409, and cysteine 412.

The protein belongs to the aconitase/IPM isomerase family. LeuC type 1 subfamily. In terms of assembly, heterodimer of LeuC and LeuD. Requires [4Fe-4S] cluster as cofactor.

It catalyses the reaction (2R,3S)-3-isopropylmalate = (2S)-2-isopropylmalate. The protein operates within amino-acid biosynthesis; L-leucine biosynthesis; L-leucine from 3-methyl-2-oxobutanoate: step 2/4. Catalyzes the isomerization between 2-isopropylmalate and 3-isopropylmalate, via the formation of 2-isopropylmaleate. The chain is 3-isopropylmalate dehydratase large subunit from Thioalkalivibrio sulfidiphilus (strain HL-EbGR7).